The sequence spans 459 residues: Ribulose bisphosphate carboxylase large chain (459 aa).

At Lys-4 the chain carries N6,N6,N6-trimethyllysine. Positions 113 and 163 each coordinate substrate. The Proton acceptor role is filled by Lys-165. Lys-167 provides a ligand contact to substrate. Mg(2+) is bound by residues Lys-191, Asp-193, and Glu-194. The residue at position 191 (Lys-191) is an N6-carboxylysine. The active-site Proton acceptor is His-284. Substrate contacts are provided by Arg-285, His-317, and Ser-369.

It belongs to the RuBisCO large chain family. Type I subfamily. As to quaternary structure, heterohexadecamer of 8 large chains and 8 small chains; disulfide-linked. The disulfide link is formed within the large subunit homodimers. Requires Mg(2+) as cofactor. Post-translationally, the disulfide bond which can form in the large chain dimeric partners within the hexadecamer appears to be associated with oxidative stress and protein turnover.

The protein localises to the plastid. Its subcellular location is the chloroplast. It carries out the reaction 2 (2R)-3-phosphoglycerate + 2 H(+) = D-ribulose 1,5-bisphosphate + CO2 + H2O. It catalyses the reaction D-ribulose 1,5-bisphosphate + O2 = 2-phosphoglycolate + (2R)-3-phosphoglycerate + 2 H(+). Its function is as follows. RuBisCO catalyzes two reactions: the carboxylation of D-ribulose 1,5-bisphosphate, the primary event in carbon dioxide fixation, as well as the oxidative fragmentation of the pentose substrate in the photorespiration process. Both reactions occur simultaneously and in competition at the same active site. The chain is Ribulose bisphosphate carboxylase large chain from Nyssa ogeche (Ogeechee tupelo).